Here is a 347-residue protein sequence, read N- to C-terminus: Probable nitronate monooxygenase (347 aa).

FMN contacts are provided by residues N69, Q171, G176, G213, and 232 to 235; that span reads QIGS.

Belongs to the nitronate monooxygenase family. NMO class I subfamily. It depends on FMN as a cofactor.

The enzyme catalyses 3 propionate 3-nitronate + 3 O2 + H2O = 3 3-oxopropanoate + 2 nitrate + nitrite + H2O2 + 3 H(+). Functionally, nitronate monooxygenase that uses molecular oxygen to catalyze the oxidative denitrification of alkyl nitronates. Acts on propionate 3-nitronate (P3N), the presumed physiological substrate. Probably functions in the detoxification of P3N, a metabolic poison produced by plants and fungi as a defense mechanism. The chain is Probable nitronate monooxygenase (yrpB) from Bacillus subtilis (strain 168).